The primary structure comprises 212 residues: Orotate phosphoribosyltransferase (212 aa).

5-phospho-alpha-D-ribose 1-diphosphate is bound by residues R95, K99, H101, and 121–129 (DDLITTGGS). An orotate-binding site is contributed by T125.

It belongs to the purine/pyrimidine phosphoribosyltransferase family. PyrE subfamily. Homodimer. The cofactor is Mg(2+).

It catalyses the reaction orotidine 5'-phosphate + diphosphate = orotate + 5-phospho-alpha-D-ribose 1-diphosphate. Its pathway is pyrimidine metabolism; UMP biosynthesis via de novo pathway; UMP from orotate: step 1/2. Functionally, catalyzes the transfer of a ribosyl phosphate group from 5-phosphoribose 1-diphosphate to orotate, leading to the formation of orotidine monophosphate (OMP). This Lactobacillus johnsonii (strain CNCM I-12250 / La1 / NCC 533) protein is Orotate phosphoribosyltransferase.